The primary structure comprises 140 residues: Ribonuclease P protein component (140 aa).

Positions 33 to 54 are disordered; the sequence is RALKPSSAKKSSLDTAAKTQPA.

Belongs to the RnpA family. As to quaternary structure, consists of a catalytic RNA component (M1 or rnpB) and a protein subunit.

It carries out the reaction Endonucleolytic cleavage of RNA, removing 5'-extranucleotides from tRNA precursor.. Its function is as follows. RNaseP catalyzes the removal of the 5'-leader sequence from pre-tRNA to produce the mature 5'-terminus. It can also cleave other RNA substrates such as 4.5S RNA. The protein component plays an auxiliary but essential role in vivo by binding to the 5'-leader sequence and broadening the substrate specificity of the ribozyme. The chain is Ribonuclease P protein component from Trichormus variabilis (strain ATCC 29413 / PCC 7937) (Anabaena variabilis).